The chain runs to 397 residues: Nuclear RNA export factor 5 (397 aa).

Residues 13–92 (WFKVTIPYGI…IFVSHFTAPY (80 aa)) enclose the RRM domain. LRR repeat units follow at residues 160-185 (ELLS…EKAP), 186-209 (KVKT…VKGL), 210-237 (KLEE…AIRD), and 238-265 (CFPK…ETMK). The region spanning 280–367 (LVLQFLQQSN…ESQRWWCLLS (88 aa)) is the NTF2; truncated domain.

The protein belongs to the NXF family. As to quaternary structure, interacts with NXT1 and NXT2.

It is found in the cytoplasm. The protein resides in the nucleus. Could be involved in the export of mRNA from the nucleus to the cytoplasm. Could also have a role in polarized cytoplasmic transport and localization of mRNA in neurons. This Homo sapiens (Human) protein is Nuclear RNA export factor 5 (NXF5).